Consider the following 351-residue polypeptide: Glycerol-3-phosphate dehydrogenase [NAD(P)+] (351 aa).

Positions 18, 19, 38, and 122 each coordinate NADPH. Sn-glycerol 3-phosphate is bound by residues K122, G153, and S155. Position 157 (A157) interacts with NADPH. 5 residues coordinate sn-glycerol 3-phosphate: K208, D261, S271, R272, and N273. The active-site Proton acceptor is K208. R272 is an NADPH binding site. E297 contributes to the NADPH binding site.

This sequence belongs to the NAD-dependent glycerol-3-phosphate dehydrogenase family.

The protein localises to the cytoplasm. It catalyses the reaction sn-glycerol 3-phosphate + NAD(+) = dihydroxyacetone phosphate + NADH + H(+). The catalysed reaction is sn-glycerol 3-phosphate + NADP(+) = dihydroxyacetone phosphate + NADPH + H(+). Its pathway is membrane lipid metabolism; glycerophospholipid metabolism. In terms of biological role, catalyzes the reduction of the glycolytic intermediate dihydroxyacetone phosphate (DHAP) to sn-glycerol 3-phosphate (G3P), the key precursor for phospholipid synthesis. In Bordetella bronchiseptica (strain ATCC BAA-588 / NCTC 13252 / RB50) (Alcaligenes bronchisepticus), this protein is Glycerol-3-phosphate dehydrogenase [NAD(P)+].